The chain runs to 125 residues: Large ribosomal subunit protein bL12 (125 aa).

Belongs to the bacterial ribosomal protein bL12 family. As to quaternary structure, homodimer. Part of the ribosomal stalk of the 50S ribosomal subunit. Forms a multimeric L10(L12)X complex, where L10 forms an elongated spine to which 2 to 4 L12 dimers bind in a sequential fashion. Binds GTP-bound translation factors.

In terms of biological role, forms part of the ribosomal stalk which helps the ribosome interact with GTP-bound translation factors. Is thus essential for accurate translation. In Cereibacter sphaeroides (strain ATCC 17023 / DSM 158 / JCM 6121 / CCUG 31486 / LMG 2827 / NBRC 12203 / NCIMB 8253 / ATH 2.4.1.) (Rhodobacter sphaeroides), this protein is Large ribosomal subunit protein bL12.